A 500-amino-acid polypeptide reads, in one-letter code: NAD(P)H-quinone oxidoreductase chain 4, chloroplastic (500 aa).

14 consecutive transmembrane segments (helical) span residues 3 to 23, 37 to 57, 84 to 104, 111 to 129, 134 to 154, 167 to 187, 208 to 228, 242 to 262, 272 to 292, 305 to 325, 330 to 350, 386 to 406, 416 to 436, and 462 to 482; these read FFPW…VIFF, ICIC…HFQF, GLSI…TLAA, SRLF…IGSF, LLLF…LLSI, FILY…GVGL, ALEI…SPII, HYST…YGLI, AHSI…IYAA, IAYS…SITD, GAIL…FLAG, LALP…GIIT, ILIT…SLSM, and LFVS…PDFV.

This sequence belongs to the complex I subunit 4 family.

It localises to the plastid. It is found in the chloroplast thylakoid membrane. The enzyme catalyses a plastoquinone + NADH + (n+1) H(+)(in) = a plastoquinol + NAD(+) + n H(+)(out). It carries out the reaction a plastoquinone + NADPH + (n+1) H(+)(in) = a plastoquinol + NADP(+) + n H(+)(out). In Panax ginseng (Korean ginseng), this protein is NAD(P)H-quinone oxidoreductase chain 4, chloroplastic.